A 335-amino-acid chain; its full sequence is Methionine import ATP-binding protein MetN 2 (335 aa).

The ABC transporter domain maps to 2–242 (IEFQNVHKTY…PEHPTTKRFV (241 aa)). An ATP-binding site is contributed by 38–45 (GHSGAGKS).

The protein belongs to the ABC transporter superfamily. Methionine importer (TC 3.A.1.24) family. As to quaternary structure, the complex is composed of two ATP-binding proteins (MetN), two transmembrane proteins (MetI) and a solute-binding protein (MetQ).

Its subcellular location is the cell inner membrane. The enzyme catalyses L-methionine(out) + ATP + H2O = L-methionine(in) + ADP + phosphate + H(+). The catalysed reaction is D-methionine(out) + ATP + H2O = D-methionine(in) + ADP + phosphate + H(+). Its function is as follows. Part of the ABC transporter complex MetNIQ involved in methionine import. Responsible for energy coupling to the transport system. This chain is Methionine import ATP-binding protein MetN 2, found in Pseudomonas entomophila (strain L48).